The following is a 364-amino-acid chain: Geranylfarnesyl diphosphate synthase, chloroplastic (364 aa).

Residues 1-51 constitute a chloroplast transit peptide; the sequence is MSHCTIFLYKYFPGKPRYQHCSFLHPLNHKLKSLFLPITGSRFLSNSTFSV. Positions 72, 111, and 143 each coordinate isopentenyl diphosphate. Mg(2+) is bound by residues Asp150 and Asp156. Residue Arg161 coordinates dimethylallyl diphosphate. Arg162 provides a ligand contact to isopentenyl diphosphate. The dimethylallyl diphosphate site is built by Lys249, Thr250, Gln287, Asp294, Lys304, and Lys314.

This sequence belongs to the FPP/GGPP synthase family. In terms of assembly, monomer. Mg(2+) serves as cofactor. Strongly expressed in glandular trichomes, and, at low levels, in leaves, stems and flowers.

The protein localises to the plastid. It localises to the chloroplast. It catalyses the reaction isopentenyl diphosphate + (2E,6E,10E)-geranylgeranyl diphosphate = (2E,6E,10E,14E)-geranylfarnesyl diphosphate + diphosphate. The catalysed reaction is 2 isopentenyl diphosphate + (2E,6E)-farnesyl diphosphate = (2E,6E,10E,14E)-geranylfarnesyl diphosphate + 2 diphosphate. It carries out the reaction 3 isopentenyl diphosphate + (2E)-geranyl diphosphate = (2E,6E,10E,14E)-geranylfarnesyl diphosphate + 3 diphosphate. The enzyme catalyses 4 isopentenyl diphosphate + dimethylallyl diphosphate = (2E,6E,10E,14E)-geranylfarnesyl diphosphate + 4 diphosphate. Its pathway is secondary metabolite biosynthesis; terpenoid biosynthesis. It participates in isoprenoid biosynthesis. Functionally, involved in the biosynthesis of leucosceptrane sesterterpenoids natural products, which are playing defensive roles toward herbivorus insects (e.g. Spodoptera exigua). Catalyzes the condensation of isopentenyl pyrophosphate (IDP) with the allylic pyrophosphates to yield geranylfarnesyl diphosphate (GFDP), the C(25) prenyl diphosphate precursor to all sesterterpenoids. Geranylgeranyl diphosphate (GGPP) is the preferred substrate, however dimethylallyl diphosphate (DMADP), farnesyl diphosphate (FDP) and geranyl diphosphate (GDP) can also be used as allylic substrate. The polypeptide is Geranylfarnesyl diphosphate synthase, chloroplastic (Leucosceptrum canum (Hairy white-wand)).